Consider the following 41-residue polypeptide: uncharacterized protein (41 aa).

This is an uncharacterized protein from Bacillus subtilis (strain 168).